We begin with the raw amino-acid sequence, 230 residues long: MKNLEALLKSSFAIEFEDKTLLETAFTHTSYANEHRLLNISHNERLEFLGDAVLQLIISEYLFKKYPHKAEGELSKQRSMIVREESLASFSRHCAFEPYIKLGKGEEKSGGRNRDTILGDLFEAFLGALLLDKGVEEVRRFLNQVMIPQVEKGNFEKVNDYKTSLQEILQAKGDTIIDYKVINESGPAHAKQFEVVVLANQVELSKGIGRSKKLAEQNAAENALKALSEE.

Residues 5-134 form the RNase III domain; it reads EALLKSSFAI…FLGALLLDKG (130 aa). Residue Glu47 participates in Mg(2+) binding. Asp51 is an active-site residue. Asp120 and Glu123 together coordinate Mg(2+). Residue Glu123 is part of the active site. The 70-residue stretch at 160 to 229 folds into the DRBM domain; that stretch reads DYKTSLQEIL…AENALKALSE (70 aa).

Belongs to the ribonuclease III family. As to quaternary structure, homodimer. It depends on Mg(2+) as a cofactor.

The protein resides in the cytoplasm. The enzyme catalyses Endonucleolytic cleavage to 5'-phosphomonoester.. Functionally, digests double-stranded RNA. Involved in the processing of primary rRNA transcript to yield the immediate precursors to the large and small rRNAs (23S and 16S). Processes some mRNAs, and tRNAs when they are encoded in the rRNA operon. Processes pre-crRNA and tracrRNA of type II CRISPR loci if present in the organism. The polypeptide is Ribonuclease 3 (Streptococcus uberis (strain ATCC BAA-854 / 0140J)).